Consider the following 300-residue polypeptide: tRNA-cytidine(32) 2-sulfurtransferase (300 aa).

Residues 41 to 46 carry the PP-loop motif motif; it reads SGGKDS. 3 residues coordinate [4Fe-4S] cluster: Cys-116, Cys-119, and Cys-207.

This sequence belongs to the TtcA family. Homodimer. It depends on Mg(2+) as a cofactor. The cofactor is [4Fe-4S] cluster.

It localises to the cytoplasm. The enzyme catalyses cytidine(32) in tRNA + S-sulfanyl-L-cysteinyl-[cysteine desulfurase] + AH2 + ATP = 2-thiocytidine(32) in tRNA + L-cysteinyl-[cysteine desulfurase] + A + AMP + diphosphate + H(+). It participates in tRNA modification. In terms of biological role, catalyzes the ATP-dependent 2-thiolation of cytidine in position 32 of tRNA, to form 2-thiocytidine (s(2)C32). The sulfur atoms are provided by the cysteine/cysteine desulfurase (IscS) system. The sequence is that of tRNA-cytidine(32) 2-sulfurtransferase from Idiomarina loihiensis (strain ATCC BAA-735 / DSM 15497 / L2-TR).